A 35-amino-acid chain; its full sequence is Probable L,D-transpeptidase ErfK/SrfK (35 aa).

The N-terminal stretch at M1–A21 is a signal peptide.

This sequence belongs to the YkuD family.

The protein resides in the periplasm. Its pathway is cell wall biogenesis; peptidoglycan biosynthesis. The polypeptide is Probable L,D-transpeptidase ErfK/SrfK (erfK) (Klebsiella aerogenes (Enterobacter aerogenes)).